Reading from the N-terminus, the 196-residue chain is DnaA initiator-associating protein DiaA (196 aa).

The SIS domain maps to 34–196 (LVQSLLNGNK…DNTLFPHQND (163 aa)).

Belongs to the SIS family. DiaA subfamily. Homotetramer; dimer of dimers.

Functionally, required for the timely initiation of chromosomal replication via direct interactions with the DnaA initiator protein. This is DnaA initiator-associating protein DiaA from Yersinia pestis bv. Antiqua (strain Antiqua).